The following is a 1113-amino-acid chain: MQQNSEFLTETPGSDPHISQLHANSVMESQLLDDFLLNGSPMYQDDSMAHINIDEGANFQNFIKTDEGDSPNLLSFEGIGNNTHVNQNVSTPLEEEMESNRALKEEEEDEHENKVFNEKNIGNPAHDEIVFGRKETIQSVYINPLDYLKVNAAQLPLDVEVSGLPQVSRVENQLKLKVKITSETPLNQSMLYLPSDSISREKFYLKKNIEDFSEDFKKNLLYINAFVLCAVSNRTTNVCTKCVKREQRRAARRKSGIADNLLWCNNINRRLVVFNNKQVFPIMKTFDNVKEFELTTRLVCYCRHHKANNGFVILFTITDWQNRLLGKFTTTPIMITDRKPANMDTTKFNNTTTSSRRQLTEEESTTEYYSTDNNQLSKDENMPFQYTYQHNPYDNDSQMNNIPLKDKNVPFPYSISQQTDLLQNNNLSLNLSLPNQHIPSPTSMSEEGSESFNYHHRDNDNPVRTISLTNIEQQSQLNQRKRARNNLENDIGKPLFKHSFSNSISATNTMNPALHSMQDFSMKNNNNNLPSINRVIPSQGPINGGIEVTLLGCNFKDGLSVKFGSNLALSTQCWSETTIVTYLPPAAYAGQVFVSITDTNNENNNDDLPQEIEINDNKKAIFTYVDDTDRQLIELALQIVGLKMNGKLEDARNIAKRIVGNDSPDSGTNGNSCSKSTGPSPNQHSMNLNTSVLYSDEVLIQKVIKSLNINSNISICDSLGRTLLHLACLKNYSSLVYTLIKKGARVNDIDSFGLTPLHFACISGDPKIIKMLLNCKVNYSLRSHNGLTAREVFIANHIHSKEIDKKQDNRDNHKFVHNDTYISEVLSLFEEFQNGTKFTDSVETDSNYSISRKYSQSSFNSSLLDNESLNENLFESQSMINPTSMEIQHPTLQLFENSSYSEYDQSDFEEDGDEDLFVTDEVEKPGVACREEQSELLDIGSSANEPEEDNGSTSLWNRVLHRINDDLPKYEDLFPLSWGKDDKLKTTNQDSIVEQSASNIENSENSEEEDYEEEEEFLKKQFNRFFQNKQNFRNDKMLIFFWIPLTLLLLTWFIMYKFGNQDSSINHISELISEYLRIALAKFLLGNERMKTAFRSKLSNLQTTRMLNDLIVS.

The segment at 91-114 is disordered; sequence TPLEEEMESNRALKEEEEDEHENK. Residue serine 255 is modified to Phosphoserine. 2 stretches are compositionally biased toward polar residues: residues 344–357 and 437–452; these read DTTK…SSRR and HIPS…SESF. Disordered stretches follow at residues 344-376 and 437-462; these read DTTK…NNQL and HIPS…NDNP. The residue at position 467 (serine 467) is a Phosphoserine. An IPT/TIG domain is found at 530-610; it reads PSINRVIPSQ…NENNNDDLPQ (81 aa). The segment at 658 to 687 is disordered; the sequence is IVGNDSPDSGTNGNSCSKSTGPSPNQHSMN. The span at 663–687 shows a compositional bias: polar residues; the sequence is SPDSGTNGNSCSKSTGPSPNQHSMN. ANK repeat units lie at residues 719-748 and 752-781; these read LGRT…RVND and FGLT…NYSL. Residues 1037-1054 form a helical membrane-spanning segment; the sequence is MLIFFWIPLTLLLLTWFI.

It is found in the membrane. The chain is Protein MGA2 (MGA2) from Saccharomyces cerevisiae (strain ATCC 204508 / S288c) (Baker's yeast).